The primary structure comprises 542 residues: Apolipoprotein N-acyltransferase (542 aa).

6 consecutive transmembrane segments (helical) span residues V24–A44, V54–L74, F85–V105, A116–L136, F160–V180, and G190–L210. Positions L220–L499 constitute a CN hydrolase domain. E264 serves as the catalytic Proton acceptor. K349 is an active-site residue. C404 (nucleophile) is an active-site residue. Residues L509–F529 traverse the membrane as a helical segment.

This sequence belongs to the CN hydrolase family. Apolipoprotein N-acyltransferase subfamily.

It is found in the cell inner membrane. It carries out the reaction N-terminal S-1,2-diacyl-sn-glyceryl-L-cysteinyl-[lipoprotein] + a glycerophospholipid = N-acyl-S-1,2-diacyl-sn-glyceryl-L-cysteinyl-[lipoprotein] + a 2-acyl-sn-glycero-3-phospholipid + H(+). It participates in protein modification; lipoprotein biosynthesis (N-acyl transfer). In terms of biological role, catalyzes the phospholipid dependent N-acylation of the N-terminal cysteine of apolipoprotein, the last step in lipoprotein maturation. This chain is Apolipoprotein N-acyltransferase, found in Chlamydia trachomatis serovar D (strain ATCC VR-885 / DSM 19411 / UW-3/Cx).